The chain runs to 320 residues: Malate dehydrogenase (320 aa).

Residues 10–15 (GAGQIG) and Asp34 contribute to the NAD(+) site. 2 residues coordinate substrate: Arg83 and Arg89. Residues Asn96 and 119-121 (ITN) contribute to the NAD(+) site. Positions 121 and 152 each coordinate substrate. His176 acts as the Proton acceptor in catalysis.

The protein belongs to the LDH/MDH superfamily. MDH type 3 family.

The enzyme catalyses (S)-malate + NAD(+) = oxaloacetate + NADH + H(+). Its function is as follows. Catalyzes the reversible oxidation of malate to oxaloacetate. This Dinoroseobacter shibae (strain DSM 16493 / NCIMB 14021 / DFL 12) protein is Malate dehydrogenase.